A 583-amino-acid chain; its full sequence is Sphingomyelin phosphodiesterase A (583 aa).

The N-terminal stretch at 1–21 (MKSIPIILLVLIGLLLASVYS) is a signal peptide. The 83-residue stretch at 51 to 133 (IQLSCDVCQI…GYFKICSATG (83 aa)) folds into the Saposin B-type domain. 3 disulfides stabilise this stretch: Cys55–Cys129, Cys58–Cys123, and Cys86–Cys97. Asn72 carries N-linked (GlcNAc...) asparagine glycosylation. N-linked (GlcNAc...) asparagine glycosylation occurs at Asn182. Zn(2+)-binding residues include Asp193 and His195. An intrachain disulfide couples Cys214 to Cys229. Zn(2+) is bound by residues Asp258 and Asn298. Asn377 carries an N-linked (GlcNAc...) asparagine glycan. Zn(2+)-binding residues include His401, His436, and His438. Asn495, Asn500, Asn537, and Asn547 each carry an N-linked (GlcNAc...) asparagine glycan. Cys567 and Cys580 are oxidised to a cystine.

Belongs to the acid sphingomyelinase family. Requires Zn(2+) as cofactor.

Its subcellular location is the secreted. Functionally, converts sphingomyelin to ceramide. The protein is Sphingomyelin phosphodiesterase A (sgmA) of Dictyostelium discoideum (Social amoeba).